We begin with the raw amino-acid sequence, 227 residues long: Probable GTP-binding protein EngB (227 aa).

One can recognise an EngB-type G domain in the interval 30 to 219 (KKPQIIVVGR…MVKINKNVNE (190 aa)). GTP-binding positions include 38–45 (GRSNVGKS), 63–67 (GVTLK), 80–83 (DLPG), 160–163 (NKMD), and 197–199 (IGI). Mg(2+) is bound by residues Ser-45 and Thr-65.

Belongs to the TRAFAC class TrmE-Era-EngA-EngB-Septin-like GTPase superfamily. EngB GTPase family. Mg(2+) is required as a cofactor.

In terms of biological role, necessary for normal cell division and for the maintenance of normal septation. This Methanococcus aeolicus (strain ATCC BAA-1280 / DSM 17508 / OCM 812 / Nankai-3) protein is Probable GTP-binding protein EngB.